Consider the following 366-residue polypeptide: Polyprenyl transferase AOL_s00215g276 (366 aa).

The segment at 1-22 (MESIIARPRTRSSAKEKTQTMS) is disordered. Transmembrane regions (helical) follow at residues 53-73 (LHTL…CLSA), 85-105 (FLSV…AFCT), 137-157 (IIAF…TLGF), 160-180 (ALVC…KRVV), 185-205 (LVLG…VAGN), 212-232 (AVPM…IYAT), and 253-273 (HMHQ…SFTA). A glycan (N-linked (GlcNAc...) asparagine) is linked at N277. The next 2 helical transmembrane spans lie at 281-301 (LFWS…LLSL) and 312-332 (VFLM…IELW). An N-linked (GlcNAc...) asparagine glycan is attached at N352.

Belongs to the UbiA prenyltransferase family. Mg(2+) serves as cofactor.

Its subcellular location is the membrane. It participates in secondary metabolite biosynthesis; terpenoid biosynthesis. Its function is as follows. Polyprenyl transferase; part of the gene cluster that mediates the biosynthesis of sesquiterpenyl epoxy-cyclohexenoids (SECs) such as anthrobotrisins and arthrosporols, metabolites that possess a novel hybrid carbon skeleton consisting of a polyketide-derived epoxycyclohexenol combined with a terpenoid-derived monocyclic sesquiterpenol substructure (PKS-PTS hybrid). The SEC pathway plays an important role for fungal soil colonization via decreasing fungal nematode-capturing ability. Within the pathway, the polyprenyl transferase catalyzes the farnesylation of toluquinol to yield farnesyl hydroquinone, the first hybrid precursor for biosynthesis of SECs, and farnesyl quinone (34) might be the key precursor for the epoxy ring formation. The pathway begins with the biosynthesis of 6-methylsalicylic acid (6-MSA), the first precursor of the polyketide-derived epoxycyclohexenol in arthrosporols, by the polyketide synthase (PKS) AOL_s00215g283 via condensation of 1 acetate and 3 malonate units. The 6-methylsalicylic acid decarboxylase AOL_s00215g281 then catalyzes the decarboxylation of 6-methylsalicylic acid to yield m-cresol. The cytochrome P450 monooxygenase AOL_s00215g282 further oxidizes m-cresol to yield toluquinol. With the assistance of the oxidoreductase AOL_s00215g277, the polyprenyl transferase AOL_s00215g276 catalyzes the farnesylation of toluquinol to produce farnesyl hydroquinone, the hybrid precursor for biosynthesis of SECs. Farnesyl hydroquinone undergoes epoxidation and then subsequent dehydrogenation to form farnesyl epoxy-quinone, the first and simplest SEC. The cytochrome P450 monooxygenase AOL_s00215g278 and the FAD-dependent monooxygenase AOL_s00215g279 might be involved in the oxygenation of the phenol moiety, most likely in the epoxy formation. The cytochrome P450 monooxygenases AOL_s00215g274 and AOL_s00215g280 are involved in specific regional ketone reductions at respectively C-4 and C-1 of farnesyl epoxy-quinone PubMed:33823587. The polypeptide is Polyprenyl transferase AOL_s00215g276 (Arthrobotrys oligospora (strain ATCC 24927 / CBS 115.81 / DSM 1491) (Nematode-trapping fungus)).